We begin with the raw amino-acid sequence, 246 residues long: MIIPALDIINGNIVRLYQGSYCMQTNYGEPISLLKEYIRQGAKMIHLVDLDGAKNPLKRQSLLISQLIKEANPLSKIQIGGGIRNASDVEILLESGATRIVLGSIAVTQPKIVKKWFEYFDPNTLVLAVDIHVYSEENRKVAIYGWQKETDLQLEQIIEEYYTVGLKHVICTDISKDGTLLGSNISLYRSICHAWPRIAFQSSGGVNKLSEISKLRSSGVAGIIIGRAFLENTFTINEAISCWQNE.

Residue aspartate 7 is the Proton acceptor of the active site. Residue aspartate 130 is the Proton donor of the active site.

This sequence belongs to the HisA/HisF family.

It localises to the cytoplasm. The catalysed reaction is 1-(5-phospho-beta-D-ribosyl)-5-[(5-phospho-beta-D-ribosylamino)methylideneamino]imidazole-4-carboxamide = 5-[(5-phospho-1-deoxy-D-ribulos-1-ylimino)methylamino]-1-(5-phospho-beta-D-ribosyl)imidazole-4-carboxamide. It participates in amino-acid biosynthesis; L-histidine biosynthesis; L-histidine from 5-phospho-alpha-D-ribose 1-diphosphate: step 4/9. The chain is 1-(5-phosphoribosyl)-5-[(5-phosphoribosylamino)methylideneamino] imidazole-4-carboxamide isomerase from Blochmanniella pennsylvanica (strain BPEN).